The sequence spans 548 residues: Dihydroxy-acid dehydratase (548 aa).

Residue D78 participates in Mg(2+) binding. C119 lines the [2Fe-2S] cluster pocket. Positions 120 and 121 each coordinate Mg(2+). Residue K121 is modified to N6-carboxylysine. C185 lines the [2Fe-2S] cluster pocket. Mg(2+) is bound at residue E438. The active-site Proton acceptor is S464.

The protein belongs to the IlvD/Edd family. As to quaternary structure, homodimer. [2Fe-2S] cluster is required as a cofactor. Requires Mg(2+) as cofactor.

It catalyses the reaction (2R)-2,3-dihydroxy-3-methylbutanoate = 3-methyl-2-oxobutanoate + H2O. It carries out the reaction (2R,3R)-2,3-dihydroxy-3-methylpentanoate = (S)-3-methyl-2-oxopentanoate + H2O. The protein operates within amino-acid biosynthesis; L-isoleucine biosynthesis; L-isoleucine from 2-oxobutanoate: step 3/4. It functions in the pathway amino-acid biosynthesis; L-valine biosynthesis; L-valine from pyruvate: step 3/4. Functionally, functions in the biosynthesis of branched-chain amino acids. Catalyzes the dehydration of (2R,3R)-2,3-dihydroxy-3-methylpentanoate (2,3-dihydroxy-3-methylvalerate) into 2-oxo-3-methylpentanoate (2-oxo-3-methylvalerate) and of (2R)-2,3-dihydroxy-3-methylbutanoate (2,3-dihydroxyisovalerate) into 2-oxo-3-methylbutanoate (2-oxoisovalerate), the penultimate precursor to L-isoleucine and L-valine, respectively. This chain is Dihydroxy-acid dehydratase, found in Methanothrix thermoacetophila (strain DSM 6194 / JCM 14653 / NBRC 101360 / PT) (Methanosaeta thermophila).